Consider the following 457-residue polypeptide: Phosphatidate cytidylyltransferase (457 aa).

6 consecutive transmembrane segments (helical) span residues 71–91, 154–174, 188–208, 214–234, 255–275, and 330–350; these read VMIS…IVLI, FIVT…FVLF, GSLC…HLII, GLFW…FAYL, GFLG…RILS, and FHAL…GFFA.

The protein belongs to the CDS family. Homodimer. The cofactor is Mg(2+).

Its subcellular location is the endoplasmic reticulum membrane. It is found in the cytoplasmic vesicle. The protein localises to the secretory vesicle. It catalyses the reaction a 1,2-diacyl-sn-glycero-3-phosphate + CTP + H(+) = a CDP-1,2-diacyl-sn-glycerol + diphosphate. It participates in phospholipid metabolism; CDP-diacylglycerol biosynthesis; CDP-diacylglycerol from sn-glycerol 3-phosphate: step 3/3. Supplies CDP-diacylglycerol, which may play an important role as both a precursor to phosphoinositide biosynthesis in the plasma membrane and as a negative effector of phosphatidylinositol 4-kinase activity, thereby exerting an effect on cell proliferation via a lipid-dependent signal transduction cascade. The chain is Phosphatidate cytidylyltransferase (CDS1) from Saccharomyces cerevisiae (strain ATCC 204508 / S288c) (Baker's yeast).